Reading from the N-terminus, the 202-residue chain is Protease (202 aa).

Residues His55, Asp72, and Cys122 contribute to the active site.

It belongs to the peptidase C5 family. In terms of assembly, interacts with protease cofactor pVI-C; this interaction is necessary for protease activation.

The protein localises to the virion. It is found in the host nucleus. The enzyme catalyses Cleaves proteins of the adenovirus and its host cell at two consensus sites: -Yaa-Xaa-Gly-Gly-|-Xaa- and -Yaa-Xaa-Gly-Xaa-|-Gly- (in which Yaa is Met, Ile or Leu, and Xaa is any amino acid).. With respect to regulation, requires DNA and protease cofactor for maximal activation. Inside nascent virions, becomes partially activated by binding to the viral DNA, allowing it to cleave the cofactor that binds to the protease and fully activates it. Actin, like the viral protease cofactor, seems to act as a cofactor in the cleavage of cytokeratin 18 and of actin itself. Its function is as follows. Cleaves viral precursor proteins (pTP, pIIIa, pVI, pVII, pVIII, and pX) inside newly assembled particles giving rise to mature virions. Protease complexed to its cofactor slides along the viral DNA to specifically locate and cleave the viral precursors. Mature virions have a weakened organization compared to the unmature virions, thereby facilitating subsequent uncoating. Without maturation, the particle lacks infectivity and is unable to uncoat. Late in adenovirus infection, in the cytoplasm, may participate in the cytoskeleton destruction. Cleaves host cell cytoskeletal keratins K7 and K18. The sequence is that of Protease from Bovine adenovirus 7 (BAdV-7).